Here is a 424-residue protein sequence, read N- to C-terminus: Mitogen-activated protein kinase mpkA (424 aa).

The 292-residue stretch at 23 to 314 folds into the Protein kinase domain; it reads YNVTKELGQG…VEEALEHPYL (292 aa). ATP-binding positions include 29 to 37 and K52; that span reads LGQGAYGIV. Residues 375 to 424 form a disordered region; sequence QQIAQQTNVPIPDHQQGGWKQEEPKPQEVHAAGGHVNDLESSLQRGMDVQ.

Belongs to the protein kinase superfamily. Ser/Thr protein kinase family. Interacts with flbB, flbC, brlA, and rasB. Interacts with fmqA and fmqC. Interacts with hsp90. Mg(2+) serves as cofactor. Post-translationally, phosphorylated by the upstreamm MAPKK mkk2. Phosphorylation is induced during asexual development. Phosphorylation is regulated by rlmA.

It catalyses the reaction L-seryl-[protein] + ATP = O-phospho-L-seryl-[protein] + ADP + H(+). It carries out the reaction L-threonyl-[protein] + ATP = O-phospho-L-threonyl-[protein] + ADP + H(+). Its activity is regulated as follows. Activated by threonine and tyrosine phosphorylation by the upstreamm MAPKK mkk2. In terms of biological role, mitogen-activated protein kinase; part of cell wall integrity (CWI) signaling pathway composed of pkcA, the bck1-mkk2-mpka MAPK cascade and the downstream rlmA transcription regulator. The CWI signaling pathway regulates cell wall integrity and pyomelanin formation. CWI also controls oxidative stress response, gliotoxin production, iron adaptation and asexual development. Finally, CWI is constitutively required for A.fumigatus to cope with the temperature increase found in the mammalian lung environment, during infection. MpkA positively modulates the expression of fumiquinazoline cluster during conidiogenesis and directly phosphorylates fmqC, and perhaps also fmqA. The polypeptide is Mitogen-activated protein kinase mpkA (Aspergillus fumigatus (strain ATCC MYA-4609 / CBS 101355 / FGSC A1100 / Af293) (Neosartorya fumigata)).